The sequence spans 480 residues: Sestrin-2 (480 aa).

M1 carries the post-translational modification N-acetylmethionine. Residues P20–S45 form a disordered region. The interval G66 to S239 is N-terminal domain; mediates the alkylhydroperoxide reductase activity. Residue C125 is the Cysteine sulfenic acid (-SOH) intermediate of the active site. Residue K175 forms a Glycyl lysine isopeptide (Lys-Gly) (interchain with G-Cter in ubiquitin) linkage. Disordered stretches follow at residues A222–F252 and L272–K291. Residue S249 is modified to Phosphoserine. The tract at residues P308–T480 is C-terminal domain; mediates TORC1 regulation. L-leucine-binding positions include T374–T377, T386, and E451.

Belongs to the sestrin family. Interacts with the GATOR2 complex which is composed of MIOS, SEC13, SEH1L, WDR24 and WDR59; the interaction is negatively regulated by leucine. Conveys leucine availability via direct interaction with SEH1L and WDR24 components of the GATOR2 complex. Interacts with RRAGA, RRAGB, RRAGC and RRAGD; may function as a guanine nucleotide dissociation inhibitor for RRAGs and regulate them. May interact with the TORC2 complex. Interacts with KEAP1, RBX1, SQSTM and ULK1; to regulate the degradation of KEAP1. May also associate with the complex composed of TSC1, TSC2 and the AMP-responsive protein kinase/AMPK to regulate TORC1 signaling. May interact with PRDX1. Phosphorylated by ULK1 at multiple sites. Post-translationally, ubiquitinated at Lys-175 by RNF167 via 'Lys-63'-linked polyubiquitination in response to leucine deprivation: ubiquitination promotes SESN2-interaction with the GATOR2 complex, leading to inhibit the TORC1 signaling pathway. Deubiquitinated at Lys-175 by STAMBPL1, promoting the TORC1 signaling pathway. Ubiquitinated by RNF186; ubiquitination mediates proteasomal degradation. Widely expressed.

It localises to the cytoplasm. It catalyses the reaction a hydroperoxide + L-cysteinyl-[protein] = S-hydroxy-L-cysteinyl-[protein] + an alcohol. Functions as an intracellular leucine sensor that negatively regulates the mTORC1 signaling pathway through the GATOR complex. In absence of leucine, binds the GATOR subcomplex GATOR2 and prevents mTORC1 signaling. Binding of leucine to SESN2 disrupts its interaction with GATOR2 thereby activating the TORC1 signaling pathway. This stress-inducible metabolic regulator also plays a role in protection against oxidative and genotoxic stresses. May negatively regulate protein translation in response to endoplasmic reticulum stress, via mTORC1. May positively regulate the transcription by NFE2L2 of genes involved in the response to oxidative stress by facilitating the SQSTM1-mediated autophagic degradation of KEAP1. May also mediate TP53 inhibition of TORC1 signaling upon genotoxic stress. Moreover, may prevent the accumulation of reactive oxygen species (ROS) through the alkylhydroperoxide reductase activity born by the N-terminal domain of the protein. Was originally reported to contribute to oxidative stress resistance by reducing PRDX1. However, this could not be confirmed. This chain is Sestrin-2, found in Homo sapiens (Human).